The primary structure comprises 320 residues: ATP-dependent 6-phosphofructokinase (320 aa).

Position 12 (Gly-12) interacts with ATP. ADP-binding positions include 22–26 (RGVVR) and 55–60 (RYSVSD). ATP-binding positions include 73–74 (RF) and 103–106 (GDGS). Mg(2+) is bound at residue Asp-104. 126 to 128 (TID) provides a ligand contact to substrate. The Proton acceptor role is filled by Asp-128. Arg-155 is an ADP binding site. Substrate is bound by residues Arg-163 and 170-172 (MGR). Residues 186–188 (GCE), Lys-212, and 214–216 (KKH) contribute to the ADP site. Substrate contacts are provided by residues Glu-223, Arg-244, and 250-253 (HIQR).

Belongs to the phosphofructokinase type A (PFKA) family. ATP-dependent PFK group I subfamily. Prokaryotic clade 'B1' sub-subfamily. As to quaternary structure, homotetramer. It depends on Mg(2+) as a cofactor.

It is found in the cytoplasm. It catalyses the reaction beta-D-fructose 6-phosphate + ATP = beta-D-fructose 1,6-bisphosphate + ADP + H(+). It functions in the pathway carbohydrate degradation; glycolysis; D-glyceraldehyde 3-phosphate and glycerone phosphate from D-glucose: step 3/4. With respect to regulation, allosterically activated by ADP and other diphosphonucleosides, and allosterically inhibited by phosphoenolpyruvate. In terms of biological role, catalyzes the phosphorylation of D-fructose 6-phosphate to fructose 1,6-bisphosphate by ATP, the first committing step of glycolysis. This Buchnera aphidicola subsp. Schizaphis graminum (strain Sg) protein is ATP-dependent 6-phosphofructokinase.